The following is a 487-amino-acid chain: Cytochrome c-552 (487 aa).

Residues Met-1 to Ala-27 form the signal peptide. His-104 is a binding site for heme c. Positions 132, 135, and 136 each coordinate heme. The heme c site is built by Cys-170, Cys-173, His-174, Cys-219, Cys-222, and His-223. The Ca(2+) site is built by Glu-225, Tyr-226, Lys-271, and Gln-273. Substrate is bound at residue Tyr-226. His-274 contributes to the substrate binding site. Heme c-binding residues include His-285, Cys-292, Cys-295, His-296, His-311, Cys-324, Cys-327, His-328, and His-403.

Belongs to the cytochrome c-552 family. The cofactor is Ca(2+). Heme c serves as cofactor.

The protein resides in the periplasm. It catalyses the reaction 6 Fe(III)-[cytochrome c] + NH4(+) + 2 H2O = 6 Fe(II)-[cytochrome c] + nitrite + 8 H(+). The protein operates within nitrogen metabolism; nitrate reduction (assimilation). Catalyzes the reduction of nitrite to ammonia, consuming six electrons in the process. The chain is Cytochrome c-552 from Photobacterium profundum (strain SS9).